A 425-amino-acid chain; its full sequence is Exodeoxyribonuclease 7 large subunit (425 aa).

The protein belongs to the XseA family. As to quaternary structure, heterooligomer composed of large and small subunits.

Its subcellular location is the cytoplasm. It catalyses the reaction Exonucleolytic cleavage in either 5'- to 3'- or 3'- to 5'-direction to yield nucleoside 5'-phosphates.. Bidirectionally degrades single-stranded DNA into large acid-insoluble oligonucleotides, which are then degraded further into small acid-soluble oligonucleotides. This chain is Exodeoxyribonuclease 7 large subunit, found in Nocardia farcinica (strain IFM 10152).